Reading from the N-terminus, the 474-residue chain is 3-isopropylmalate dehydratase large subunit (474 aa).

[4Fe-4S] cluster contacts are provided by C355, C415, and C418.

The protein belongs to the aconitase/IPM isomerase family. LeuC type 1 subfamily. Heterodimer of LeuC and LeuD. The cofactor is [4Fe-4S] cluster.

It catalyses the reaction (2R,3S)-3-isopropylmalate = (2S)-2-isopropylmalate. It functions in the pathway amino-acid biosynthesis; L-leucine biosynthesis; L-leucine from 3-methyl-2-oxobutanoate: step 2/4. In terms of biological role, catalyzes the isomerization between 2-isopropylmalate and 3-isopropylmalate, via the formation of 2-isopropylmaleate. This is 3-isopropylmalate dehydratase large subunit from Shewanella sp. (strain MR-7).